A 521-amino-acid chain; its full sequence is Bifunctional purine biosynthesis protein PurH (521 aa).

Residues 1–145 form the MGS-like domain; that stretch reads MIKQALISVS…KNHRDVTVVV (145 aa).

This sequence belongs to the PurH family.

The enzyme catalyses (6R)-10-formyltetrahydrofolate + 5-amino-1-(5-phospho-beta-D-ribosyl)imidazole-4-carboxamide = 5-formamido-1-(5-phospho-D-ribosyl)imidazole-4-carboxamide + (6S)-5,6,7,8-tetrahydrofolate. It catalyses the reaction IMP + H2O = 5-formamido-1-(5-phospho-D-ribosyl)imidazole-4-carboxamide. Its pathway is purine metabolism; IMP biosynthesis via de novo pathway; 5-formamido-1-(5-phospho-D-ribosyl)imidazole-4-carboxamide from 5-amino-1-(5-phospho-D-ribosyl)imidazole-4-carboxamide (10-formyl THF route): step 1/1. It participates in purine metabolism; IMP biosynthesis via de novo pathway; IMP from 5-formamido-1-(5-phospho-D-ribosyl)imidazole-4-carboxamide: step 1/1. This chain is Bifunctional purine biosynthesis protein PurH, found in Burkholderia lata (strain ATCC 17760 / DSM 23089 / LMG 22485 / NCIMB 9086 / R18194 / 383).